A 277-amino-acid chain; its full sequence is 3-methyl-2-oxobutanoate hydroxymethyltransferase (277 aa).

Aspartate 53 and aspartate 96 together coordinate Mg(2+). 3-methyl-2-oxobutanoate is bound by residues 53–54 (DS), aspartate 96, and lysine 126. Glutamate 128 is a Mg(2+) binding site. The active-site Proton acceptor is glutamate 195.

This sequence belongs to the PanB family. Homodecamer; pentamer of dimers. It depends on Mg(2+) as a cofactor.

It is found in the cytoplasm. The enzyme catalyses 3-methyl-2-oxobutanoate + (6R)-5,10-methylene-5,6,7,8-tetrahydrofolate + H2O = 2-dehydropantoate + (6S)-5,6,7,8-tetrahydrofolate. Its pathway is cofactor biosynthesis; (R)-pantothenate biosynthesis; (R)-pantoate from 3-methyl-2-oxobutanoate: step 1/2. Functionally, catalyzes the reversible reaction in which hydroxymethyl group from 5,10-methylenetetrahydrofolate is transferred onto alpha-ketoisovalerate to form ketopantoate. The protein is 3-methyl-2-oxobutanoate hydroxymethyltransferase of Chlorobium phaeobacteroides (strain DSM 266 / SMG 266 / 2430).